A 209-amino-acid polypeptide reads, in one-letter code: V-type ATP synthase subunit D (209 aa).

Belongs to the V-ATPase D subunit family.

Functionally, produces ATP from ADP in the presence of a proton gradient across the membrane. This Chlamydia pneumoniae (Chlamydophila pneumoniae) protein is V-type ATP synthase subunit D (atpD).